The chain runs to 396 residues: Probable isocitrate dehydrogenase [NAD] gamma 2, mitochondrial (396 aa).

The transit peptide at 1 to 25 (MLAVTSCSMKTVLQYAVFLGHSREV) directs the protein to the mitochondrion. Thr-117 is a binding site for citrate. Residues Arg-133, Arg-164, and Asp-251 each coordinate substrate. Asp-251 contributes to the Mn(2+) binding site. Asn-321 serves as a coordination point for ADP.

It belongs to the isocitrate and isopropylmalate dehydrogenases family. Heterooligomer of subunits alpha (IDH3A), beta (IDH3B), and gamma (IDH3G) in the apparent ratio of 2:1:1. The heterodimer containing one IDH3A and one IDH3B subunit and the heterodimer containing one IDH3A and one IDH3G subunit assemble into a heterotetramer (which contains two subunits of IDH3A, one of IDH3B and one of IDH3G) and further into the heterooctamer. Mg(2+) serves as cofactor. The cofactor is Mn(2+).

It localises to the mitochondrion. Its activity is regulated as follows. The heterotetramer and the heterodimer composed of IDH3A and IDH3G subunits can be allosterically activated by citrate (CIT) or/and ADP, and the two activators can act independently or synergistically. The heterodimer composed of IDH3A and IDH3B subunits cannot be allosterically regulated and the allosteric regulation of the heterotetramer is through the IDH3G subunit and not the IDH3B subunit. The IDH3G subunit contains the allosteric site which consists of a CIT-binding site and an ADP-binding site, and the binding of CIT and ADP causes conformational changes at the allosteric site which are transmitted to the active site in the catalytic subunit (IDH3A) through a cascade of conformational changes at the heterodimer interface, leading to stabilization of the isocitrate-binding at the active site and thus activation of the enzyme. ATP can activate the heterotetramer and the heterodimer composed of IDH3A and IDH3G subunits at low concentrations but inhibits their activities at high concentrations, whereas ATP exhibits only inhibitory effect on the heterodimer composed of IDH3A and IDH3B subunits. Functionally, regulatory subunit which plays a role in the allosteric regulation of the enzyme catalyzing the decarboxylation of isocitrate (ICT) into alpha-ketoglutarate. The heterodimer composed of the alpha (IDH3A) and beta (IDH3B) subunits and the heterodimer composed of the alpha (IDH3A) and gamma (IDH3G) subunits, have considerable basal activity but the full activity of the heterotetramer (containing two subunits of IDH3A, one of IDH3B and one of IDH3G) requires the assembly and cooperative function of both heterodimers. The chain is Probable isocitrate dehydrogenase [NAD] gamma 2, mitochondrial from Mus musculus (Mouse).